The primary structure comprises 510 residues: Histidine ammonia-lyase (510 aa).

The segment at residues 143–145 is a cross-link (5-imidazolinone (Ala-Gly)); the sequence is ASG. Serine 144 is modified (2,3-didehydroalanine (Ser)).

It belongs to the PAL/histidase family. Post-translationally, contains an active site 4-methylidene-imidazol-5-one (MIO), which is formed autocatalytically by cyclization and dehydration of residues Ala-Ser-Gly.

The protein resides in the cytoplasm. The enzyme catalyses L-histidine = trans-urocanate + NH4(+). The protein operates within amino-acid degradation; L-histidine degradation into L-glutamate; N-formimidoyl-L-glutamate from L-histidine: step 1/3. This chain is Histidine ammonia-lyase, found in Shewanella woodyi (strain ATCC 51908 / MS32).